Here is a 462-residue protein sequence, read N- to C-terminus: Glutamate--tRNA ligase 1 (462 aa).

The short motif at 8 to 18 is the 'HIGH' region element; the sequence is PSPTGYLHIGG. The short motif at 236-240 is the 'KMSKS' region element; that stretch reads KLSKR. Position 239 (lysine 239) interacts with ATP.

Belongs to the class-I aminoacyl-tRNA synthetase family. Glutamate--tRNA ligase type 1 subfamily. In terms of assembly, monomer.

It localises to the cytoplasm. The catalysed reaction is tRNA(Glu) + L-glutamate + ATP = L-glutamyl-tRNA(Glu) + AMP + diphosphate. Its function is as follows. Catalyzes the attachment of glutamate to tRNA(Glu) in a two-step reaction: glutamate is first activated by ATP to form Glu-AMP and then transferred to the acceptor end of tRNA(Glu). The sequence is that of Glutamate--tRNA ligase 1 from Sulfurovum sp. (strain NBC37-1).